The chain runs to 201 residues: NADH-quinone oxidoreductase subunit C 1 (201 aa).

This sequence belongs to the complex I 30 kDa subunit family. As to quaternary structure, NDH-1 is composed of 14 different subunits. Subunits NuoB, C, D, E, F, and G constitute the peripheral sector of the complex.

The protein resides in the cell inner membrane. The catalysed reaction is a quinone + NADH + 5 H(+)(in) = a quinol + NAD(+) + 4 H(+)(out). Functionally, NDH-1 shuttles electrons from NADH, via FMN and iron-sulfur (Fe-S) centers, to quinones in the respiratory chain. The immediate electron acceptor for the enzyme in this species is believed to be ubiquinone. Couples the redox reaction to proton translocation (for every two electrons transferred, four hydrogen ions are translocated across the cytoplasmic membrane), and thus conserves the redox energy in a proton gradient. This is NADH-quinone oxidoreductase subunit C 1 from Rhizobium meliloti (strain 1021) (Ensifer meliloti).